Here is a 2766-residue protein sequence, read N- to C-terminus: Thyroglobulin (2766 aa).

Positions 1–20 (MTALVLWVSTLLSSVCLVAA) are cleaved as a signal peptide. An Iodotyrosine; alternate modification is found at Tyr25. Tyr25 carries the post-translational modification Sulfotyrosine; alternate. Tyr25 carries the thyroxine; alternate modification. Tyr25 is subject to Triiodothyronine; alternate. 4 consecutive Thyroglobulin type-1 domains span residues 32–93 (LRPC…PTVC), 94–161 (LSFC…PTRC), 162–298 (PRSC…RFRC), and 299–359 (PTKC…PPSC). 8 cysteine pairs are disulfide-bonded: Cys35-Cys53, Cys64-Cys71, Cys73-Cys93, Cys97-Cys121, Cys132-Cys139, Cys141-Cys161, Cys165-Cys184, and Cys195-Cys236. Position 109 is an iodotyrosine (Tyr109). N-linked (GlcNAc...) asparagine glycosylation is present at Asn111. The residue at position 150 (Tyr150) is an Iodotyrosine; alternate. A Diiodotyrosine; alternate modification is found at Tyr150. Asn199 is a glycosylation site (N-linked (GlcNAc...) asparagine). Iodotyrosine occurs at positions 235 and 259. 9 cysteine pairs are disulfide-bonded: Cys302–Cys320, Cys331–Cys337, Cys339–Cys359, Cys365–Cys620, Cys408–Cys608, Cys631–Cys636, Cys638–Cys658, Cys662–Cys687, and Cys698–Cys703. Asn484 and Asn496 each carry an N-linked (GlcNAc...) asparagine glycan. Thyroglobulin type-1 domains follow at residues 605 to 658 (AQAC…RPRC), 659 to 726 (PTKC…AKQC), 727 to 922 (PSVC…IPAC), 923 to 1074 (PGPC…MPQC), 1075 to 1146 (PTNC…SAQC), and 1147 to 1211 (PGLC…QPAC). At Tyr704 the chain carries Iodotyrosine; alternate. Thyroxine; alternate is present on Tyr704. Position 704 is a triiodothyronine; alternate (Tyr704). Residue Tyr704 is modified to Diiodotyrosine; alternate. Intrachain disulfides connect Cys705/Cys726, Cys730/Cys763, Cys774/Cys899, Cys901/Cys922, Cys926/Cys1032, Cys1043/Cys1050, Cys1052/Cys1074, Cys1078/Cys1109, Cys1127/Cys1146, Cys1150/Cys1170, Cys1182/Cys1189, Cys1191/Cys1211, Cys1216/Cys1265, Cys1232/Cys1246, Cys1306/Cys1356, and Cys1331/Cys1347. Residue Asn748 is glycosylated (N-linked (GlcNAc...) asparagine). An Iodotyrosine modification is found at Tyr785. N-linked (GlcNAc...) asparagine glycosylation is present at Asn817. Residue Tyr867 is modified to Iodotyrosine; alternate. The residue at position 867 (Tyr867) is a Diiodotyrosine; alternate. A Diiodotyrosine modification is found at Tyr884. Residue Asn948 is glycosylated (N-linked (GlcNAc...) asparagine). Tyr993 carries the post-translational modification Iodotyrosine; alternate. Tyr993 carries the diiodotyrosine; alternate modification. N-linked (GlcNAc...) asparagine glycosylation occurs at Asn1141. Tyr1310 is modified (iodotyrosine). Position 1310 is a thyroxine (Tyr1310). N-linked (GlcNAc...) asparagine glycosylation is found at Asn1349 and Asn1365. 9 cysteine pairs are disulfide-bonded: Cys1441–Cys1458, Cys1461–Cys1472, Cys1475–Cys1489, Cys1492–Cys1509, Cys1513–Cys1522, Cys1542–Cys1564, Cys1602–Cys1626, Cys1606–Cys1612, and Cys1638–Cys1661. Type II repeat units lie at residues 1455 to 1468 (ALGC…SFSQ), 1469 to 1485 (DGRC…EQAG), and 1486 to 1502 (SSAC…ITTG). The Thyroglobulin type-1 11 domain occupies 1510–1564 (VTDCQKNEAGLQCDQNGQYQASQKNRDSGEVFCVDSEGRKLQWLQTEAGLSESQC). The stretch at 1602 to 1722 (CLTDCANDEA…GANLTDTHTY (121 aa)) is one Type IIIA repeat. Residues Asn1715, Asn1729, Asn1773, and Asn1864 are each glycosylated (N-linked (GlcNAc...) asparagine). Cystine bridges form between Cys1723-Cys1748, Cys1727-Cys1733, Cys1732-Cys1834, and Cys1759-Cys1776. One copy of the Type IIIB repeat lies at 1723-1889 (CLLACDNDSC…LFSAEQANLW (167 aa)). 7 cysteine pairs are disulfide-bonded: Cys1890-Cys1916, Cys1894-Cys1901, Cys1925-Cys1936, Cys1993-Cys2021, Cys1997-Cys2003, Cys2002-Cys2073, and Cys2032-Cys2045. A Type IIIA repeat occupies 1890–1992 (CLSRCAQEPI…GKLISNGFFE (103 aa)). A glycan (N-linked (GlcNAc...) asparagine) is linked at Asn1935. The Type IIIB repeat unit spans residues 1993-2125 (CERLCDRDPC…AATSNFSMAQ (133 aa)). A glycan (N-linked (GlcNAc...) asparagine) is linked at Asn2010. The N-linked (GlcNAc...) asparagine glycan is linked to Asn2120. One copy of the Type IIIA repeat lies at 2126 to 2183 (DFCLQQCSRHQDCLVTTLQIQPGVVRCVFYPDIQNCIHSLRSHTCWLLLHEEATYIYR). 3 disulfide bridges follow: Cys2128–Cys2152, Cys2132–Cys2138, and Cys2161–Cys2170. At Tyr2182 the chain carries Iodotyrosine. The interval 2186–2766 (GIPLVQSDVT…LEPVPKSYSK (581 aa)) is cholinesterase-like (ChEL). An N-linked (GlcNAc...) asparagine glycan is attached at Asn2249. An intrachain disulfide couples Cys2263 to Cys2280. Residue Asn2294 is glycosylated (N-linked (GlcNAc...) asparagine). Cys2441 and Cys2452 are disulfide-bonded. Tyr2539 carries the post-translational modification Thyroxine. Tyr2572 is modified (iodotyrosine; alternate). Tyr2572 is subject to Thyroxine; alternate. Tyr2572 is subject to Triiodothyronine; alternate. Residue Tyr2572 is modified to Diiodotyrosine; alternate. Asn2581 is a glycosylation site (N-linked (GlcNAc...) asparagine). Residues Tyr2586 and Tyr2616 each carry the iodotyrosine modification. A disulfide bond links Cys2590 and Cys2714. Position 2696 is a diiodotyrosine (Tyr2696). A disordered region spans residues 2729 to 2766 (GAKDAQLTKSEEEDLEVGPGLEEDLSGSLEPVPKSYSK). Positions 2739-2753 (EEEDLEVGPGLEEDL) are enriched in acidic residues. Tyr2764 is subject to Iodotyrosine; alternate. Tyr2764 bears the Thyroxine; alternate mark. Tyr2764 carries the post-translational modification Triiodothyronine; alternate. Residue Tyr2764 is modified to Diiodotyrosine; alternate.

The protein belongs to the type-B carboxylesterase/lipase family. Monomer. Homodimer (via ChEL region); occurs in the endoplasmic reticulum and is required for export to the Golgi apparatus. Homooligomer; disulfide-linked; stored in this form in the thyroid follicle lumen. Post-translationally, iodinated on tyrosine residues by TPO. There are 4 pairs of iodinated tyrosines used for coupling: acceptor Tyr-25 is coupled to donor Tyr-150 or Tyr-235, acceptor Tyr-2572 is coupled to donor Tyr-2539, acceptor Tyr-2764 in monomer 1 is coupled to donor Tyr-2764 in monomer 2 and acceptor Tyr-1310 in monomer 1 is coupled to donor Tyr-109 in monomer 2. Sulfated tyrosines are desulfated during iodination. In terms of processing, undergoes sequential proteolysis by cathepsins to release thyroxine (T4) and triiodothyronine (T3) hormones. In the thyroid follicle lumen, cross-linked TG (storage form) is solubilized by limited proteolysis mediated by cathepsins CTSB and/or CTSL. Partially cleaved TG is further processed by CTSK/cathepsin K and/or CTSL resulting in the release of T4. Following endocytosis, further processing occurs leading to the release of T3 and more T4 hormones. Specifically expressed in the thyroid gland.

It localises to the secreted. Acts as a substrate for the production of iodinated thyroid hormones thyroxine (T4) and triiodothyronine (T3). The synthesis of T3 and T4 involves iodination of selected tyrosine residues of TG/thyroglobulin followed by their oxidative coupling. Following TG re-internalization and lysosomal-mediated proteolysis, T3 and T4 are released from the polypeptide backbone leading to their secretion into the bloodstream. One dimer produces 7 thyroid hormone molecules. This is Thyroglobulin (Tg) from Mus musculus (Mouse).